The primary structure comprises 338 residues: UPF0324 membrane protein NMA0465 (338 aa).

A run of 10 helical transmembrane segments spans residues 5–23 (PFYFGLIFIAIIAILANYL), 33–55 (HISALIIAILLGMAIGNTIYPQF), 62–84 (GVLFAKGALLRTGIVLYGFRLTF), 94–116 (AVVTDAIMLISTFFFTVLLGIRY), 123–145 (LVYLTGAGCSICGAAAVMAAESV), 155–177 (VAIAIVVIFGTLAIFTYPLFYTW), 222–239 (IRVMMLAPFLLMLSWLLT), 254–273 (IPWFAVLFIGVAIFNSFDLL), 280–302 (LFVEIDSFLLISSMAALGLTTHA), and 312–334 (PFVLGILTYLWLVVGGFLVNYGI).

The protein belongs to the UPF0324 family.

The protein resides in the cell membrane. The chain is UPF0324 membrane protein NMA0465 from Neisseria meningitidis serogroup A / serotype 4A (strain DSM 15465 / Z2491).